The primary structure comprises 421 residues: UDP-glucuronic acid decarboxylase 1 (421 aa).

The Cytoplasmic portion of the chain corresponds to 1–19 (MVRTRIQRLLTGINRRMMK). Residues 20–40 (LLIALALIAYVASVWGNFVNM) form a helical membrane-spanning segment. Residues 41-421 (SKSIQENGEQ…RVKKGRTRHN (381 aa)) are Lumenal-facing. Residues Gly99, Phe100, Val101, Asp120, Asn121, Phe123, Thr124, Gly125, Asp145, and Val146 each coordinate NAD(+). Residues Leu150 and Tyr151 each coordinate UDP-alpha-D-glucuronate. NAD(+) is bound by residues Leu160 and Ser162. Lys178 contributes to the UDP-alpha-D-glucuronate binding site. NAD(+) is bound at residue Thr179. UDP-alpha-D-glucuronate is bound by residues Asn186, Gly189, Lys192, and Arg193. NAD(+) contacts are provided by Ala201, Tyr232, and Lys236. Tyr232 functions as the Proton acceptor in the catalytic mechanism. Tyr246, Gln249, and Glu250 together coordinate UDP-alpha-D-glucuronate. NAD(+)-binding residues include Thr262, His268, and Arg273. N-linked (GlcNAc...) asparagine glycans are attached at residues Asn317 and Asn386. The disordered stretch occupies residues 400 to 421 (ANNQYIPKPKPARVKKGRTRHN). Over residues 409 to 421 (KPARVKKGRTRHN) the composition is skewed to basic residues.

Belongs to the NAD(P)-dependent epimerase/dehydratase family. UDP-glucuronic acid decarboxylase subfamily. As to quaternary structure, homodimer and homotetramer. Requires NAD(+) as cofactor.

It is found in the golgi apparatus. The protein localises to the golgi stack membrane. It catalyses the reaction UDP-alpha-D-glucuronate + H(+) = UDP-alpha-D-xylose + CO2. It functions in the pathway nucleotide-sugar biosynthesis; UDP-alpha-D-xylose biosynthesis; UDP-alpha-D-xylose from UDP-alpha-D-glucuronate: step 1/1. Its function is as follows. Catalyzes the NAD-dependent decarboxylation of UDP-glucuronic acid to UDP-xylose. Necessary for the biosynthesis of the core tetrasaccharide in glycosaminoglycan biosynthesis. This Xenopus tropicalis (Western clawed frog) protein is UDP-glucuronic acid decarboxylase 1 (uxs1).